A 213-amino-acid polypeptide reads, in one-letter code: Pyridoxine/pyridoxamine 5'-phosphate oxidase (213 aa).

Residues 60–65 (RMVLMK), 75–76 (YS), K82, and Q104 each bind FMN. K65 contacts substrate. The substrate site is built by Y122 and R126. Residues 139–140 (QS) and W184 each bind FMN. 190–192 (RLH) contributes to the substrate binding site. Position 194 (R194) interacts with FMN.

This sequence belongs to the pyridoxamine 5'-phosphate oxidase family. Homodimer. FMN serves as cofactor.

The enzyme catalyses pyridoxamine 5'-phosphate + O2 + H2O = pyridoxal 5'-phosphate + H2O2 + NH4(+). It carries out the reaction pyridoxine 5'-phosphate + O2 = pyridoxal 5'-phosphate + H2O2. The protein operates within cofactor metabolism; pyridoxal 5'-phosphate salvage; pyridoxal 5'-phosphate from pyridoxamine 5'-phosphate: step 1/1. Its pathway is cofactor metabolism; pyridoxal 5'-phosphate salvage; pyridoxal 5'-phosphate from pyridoxine 5'-phosphate: step 1/1. Catalyzes the oxidation of either pyridoxine 5'-phosphate (PNP) or pyridoxamine 5'-phosphate (PMP) into pyridoxal 5'-phosphate (PLP). The protein is Pyridoxine/pyridoxamine 5'-phosphate oxidase of Bradyrhizobium diazoefficiens (strain JCM 10833 / BCRC 13528 / IAM 13628 / NBRC 14792 / USDA 110).